We begin with the raw amino-acid sequence, 559 residues long: Transcription factor tstO (559 aa).

The zn(2)-C6 fungal-type DNA-binding region spans 23–50; the sequence is CDACQSAKVRCGREKPTCRRCQNQGKTC. 2 disordered regions span residues 166 to 316 and 453 to 477; these read GPST…TGFS and ASPPPSIFDNNNTSTTTTTSSISTA. Low complexity predominate over residues 222–232; the sequence is SSESLSLEPSS. Positions 255 to 267 are enriched in polar residues; that stretch reads TRGSQKISPNPHS. Basic and acidic residues predominate over residues 268-279; the sequence is IDSRTSSRDKSF. Low complexity-rich tracts occupy residues 286–316 and 462–477; these read STLGSRTPNTTTTSSSASSVGLTGSSTTGFS and NNNTSTTTTTSSISTA.

The protein localises to the nucleus. Transcription factore; part of the gene cluster that mediates the biosynthesis of the antihypercholesterolemic agents phomoidrides which are dimeric anhydrides. Probably regulates the expression of the genes from the cluster. The polypeptide is Transcription factor tstO (Talaromyces stipitatus (strain ATCC 10500 / CBS 375.48 / QM 6759 / NRRL 1006) (Penicillium stipitatum)).